We begin with the raw amino-acid sequence, 199 residues long: Holliday junction branch migration complex subunit RuvA (199 aa).

Residues 1 to 63 are domain I; that stretch reads MIGCLIGEVF…EDAQQLYGFS (63 aa). The interval 64-142 is domain II; it reads DAQEKTIFRT…TLAQGTSSAA (79 aa). Residues 143–150 form a flexible linker region; sequence ALPQIQFV. The domain III stretch occupies residues 150–199; that stretch reads VSNSPVAEAEAALQSLGYKPLEAQKAVAAVKADYTESADIIRAALKSMMK.

Belongs to the RuvA family. In terms of assembly, homotetramer. Forms an RuvA(8)-RuvB(12)-Holliday junction (HJ) complex. HJ DNA is sandwiched between 2 RuvA tetramers; dsDNA enters through RuvA and exits via RuvB. An RuvB hexamer assembles on each DNA strand where it exits the tetramer. Each RuvB hexamer is contacted by two RuvA subunits (via domain III) on 2 adjacent RuvB subunits; this complex drives branch migration. In the full resolvosome a probable DNA-RuvA(4)-RuvB(12)-RuvC(2) complex forms which resolves the HJ.

It is found in the cytoplasm. The RuvA-RuvB-RuvC complex processes Holliday junction (HJ) DNA during genetic recombination and DNA repair, while the RuvA-RuvB complex plays an important role in the rescue of blocked DNA replication forks via replication fork reversal (RFR). RuvA specifically binds to HJ cruciform DNA, conferring on it an open structure. The RuvB hexamer acts as an ATP-dependent pump, pulling dsDNA into and through the RuvAB complex. HJ branch migration allows RuvC to scan DNA until it finds its consensus sequence, where it cleaves and resolves the cruciform DNA. The polypeptide is Holliday junction branch migration complex subunit RuvA (Acinetobacter baumannii (strain AB307-0294)).